Reading from the N-terminus, the 311-residue chain is Methionyl-tRNA formyltransferase (311 aa).

Residues Arg33–Leu52 are disordered. Ser110 to Pro113 is a binding site for (6S)-5,6,7,8-tetrahydrofolate.

It belongs to the Fmt family.

The enzyme catalyses L-methionyl-tRNA(fMet) + (6R)-10-formyltetrahydrofolate = N-formyl-L-methionyl-tRNA(fMet) + (6S)-5,6,7,8-tetrahydrofolate + H(+). Attaches a formyl group to the free amino group of methionyl-tRNA(fMet). The formyl group appears to play a dual role in the initiator identity of N-formylmethionyl-tRNA by promoting its recognition by IF2 and preventing the misappropriation of this tRNA by the elongation apparatus. The chain is Methionyl-tRNA formyltransferase from Parafrankia sp. (strain EAN1pec).